The chain runs to 112 residues: UPF0342 protein STER_0693 (112 aa).

This sequence belongs to the UPF0342 family.

The sequence is that of UPF0342 protein STER_0693 from Streptococcus thermophilus (strain ATCC BAA-491 / LMD-9).